A 378-amino-acid chain; its full sequence is N-acetyldiaminopimelate deacetylase (378 aa).

The active site involves D72. E131 acts as the Proton acceptor in catalysis.

Belongs to the peptidase M20A family. N-acetyldiaminopimelate deacetylase subfamily.

The catalysed reaction is N-acetyl-(2S,6S)-2,6-diaminopimelate + H2O = (2S,6S)-2,6-diaminopimelate + acetate. The protein operates within amino-acid biosynthesis; L-lysine biosynthesis via DAP pathway; LL-2,6-diaminopimelate from (S)-tetrahydrodipicolinate (acetylase route): step 3/3. Functionally, catalyzes the conversion of N-acetyl-diaminopimelate to diaminopimelate and acetate. The polypeptide is N-acetyldiaminopimelate deacetylase (Enterococcus faecalis (strain ATCC 700802 / V583)).